Consider the following 597-residue polypeptide: MQLDIDRLVAYFGGVNALAEALKRHDPENAATTAAIYKWRTRGSLPLAQLQKLTALAESQGRPLDLNAFLQKNESLERTEMTQANRVIIFDTTLRDGEQSPGAAMTKEEKIRVARQLEKLGADIIEAGFAAASPGDFEAVNAIAKTITKSTVCSLSRAIERDIRQAGKAVAPAPKKRIHTFIATSPIHMEYKLKMKPKQVIEAAVKAVKIAREYTDDVEFSCEDALRSQIDFLAEICGAVIEAGATTINIPDTVGYSIPYKTEEFFRELIAKTPNGGKVVWSAHCHNDLGLAVANSLAALKGGARQVECTVNGLGERAGNASVEEIVMALKVRHDLFGLETGIDTTQIVPSSKLVSTITGYPVQPNKAIVGANAFSHESGIHQDGVLKHRETYEIMSAESVGWSANRLSLGKLSGRNAFKTKLADLGIELESEEALNAAFARFKELADKKREIFDEDLHALVSDEMGNMNAESYKFISQKISTETGEEPRADIVFGIKGEEKRASATGSGPVDAIFKAIESVAQSGATLQIYSVNAVTQGTESQGETSVRLARGNRVVNGQGADTDILAATAKAYLSALSKLEFSAAKPKAQGSGTI.

Residues 1 to 80 are unknown; it reads MQLDIDRLVA…QKNESLERTE (80 aa). The Pyruvate carboxyltransferase domain maps to 87 to 349; sequence VIIFDTTLRD…ETGIDTTQIV (263 aa). The tract at residues 87–349 is 2-isopropylmalate synthase; sequence VIIFDTTLRD…ETGIDTTQIV (263 aa). Positions 96, 284, 286, and 320 each coordinate Mn(2+). The regulatory domain stretch occupies residues 475–597; the sequence is KFISQKISTE…KPKAQGSGTI (123 aa).

Belongs to the alpha-IPM synthase/homocitrate synthase family. LeuA type 1 subfamily. In terms of assembly, homodimer. Mn(2+) serves as cofactor.

Its subcellular location is the cytoplasm. It carries out the reaction 3-methyl-2-oxobutanoate + acetyl-CoA + H2O = (2S)-2-isopropylmalate + CoA + H(+). Its pathway is amino-acid biosynthesis; L-leucine biosynthesis; L-leucine from 3-methyl-2-oxobutanoate: step 1/4. Its function is as follows. Catalyzes the condensation of the acetyl group of acetyl-CoA with 3-methyl-2-oxobutanoate (2-ketoisovalerate) to form 3-carboxy-3-hydroxy-4-methylpentanoate (2-isopropylmalate). The protein is 2-isopropylmalate synthase of Neisseria gonorrhoeae (strain ATCC 700825 / FA 1090).